The following is a 143-amino-acid chain: WW domain-containing protein C660.05 (143 aa).

Residues 9–44 (GLPAGWVAQWDPTYQAYFYINETFEGAQPQWEPPIP) enclose the WW domain. The interval 115 to 143 (HHGPLHGPHGGFGGRGGGRMGGRGGRGRR) is disordered.

This Schizosaccharomyces pombe (strain 972 / ATCC 24843) (Fission yeast) protein is WW domain-containing protein C660.05.